Consider the following 184-residue polypeptide: Ribosome-recycling factor (184 aa).

The protein belongs to the RRF family.

The protein localises to the cytoplasm. In terms of biological role, responsible for the release of ribosomes from messenger RNA at the termination of protein biosynthesis. May increase the efficiency of translation by recycling ribosomes from one round of translation to another. In Natranaerobius thermophilus (strain ATCC BAA-1301 / DSM 18059 / JW/NM-WN-LF), this protein is Ribosome-recycling factor.